The sequence spans 171 residues: Cytochrome c oxidase subunit 4 isoform 2, mitochondrial (171 aa).

A mitochondrion-targeting transit peptide spans 1 to 28 (MLPRAAWSLVLRKGGGGRRGMHSSEGTT). Residues 13–32 (KGGGGRRGMHSSEGTTRGGG) are disordered. Residues 29 to 100 (RGGGKMSPYT…TFAEMNRRSN (72 aa)) are Mitochondrial matrix-facing. Residues 101–126 (EWKTVMGCVFFFIGFAALVIWWQRVY) form a helical membrane-spanning segment. Over 127–171 (VFPPKPITLTDERKAQQLQRMLDMKVNPVQGLASRWDYEKKQWKK) the chain is Mitochondrial intermembrane.

The protein belongs to the cytochrome c oxidase IV family. Component of the cytochrome c oxidase (complex IV, CIV), a multisubunit enzyme composed of 14 subunits. The complex is composed of a catalytic core of 3 subunits MT-CO1, MT-CO2 and MT-CO3, encoded in the mitochondrial DNA, and 11 supernumerary subunits COX4I1 (or COX4I2), COX5A, COX5B, COX6A1 (or COX6A2), COX6B1 (or COX6B2), COX6C, COX7A2 (or COX7A1), COX7B, COX7C, COX8A and NDUFA4, which are encoded in the nuclear genome. The complex exists as a monomer or a dimer and forms supercomplexes (SCs) in the inner mitochondrial membrane with NADH-ubiquinone oxidoreductase (complex I, CI) and ubiquinol-cytochrome c oxidoreductase (cytochrome b-c1 complex, complex III, CIII), resulting in different assemblies (supercomplex SCI(1)III(2)IV(1) and megacomplex MCI(2)III(2)IV(2)). As to expression, highly expressed in lung.

It localises to the mitochondrion inner membrane. Its pathway is energy metabolism; oxidative phosphorylation. Its function is as follows. Component of the cytochrome c oxidase, the last enzyme in the mitochondrial electron transport chain which drives oxidative phosphorylation. The respiratory chain contains 3 multisubunit complexes succinate dehydrogenase (complex II, CII), ubiquinol-cytochrome c oxidoreductase (cytochrome b-c1 complex, complex III, CIII) and cytochrome c oxidase (complex IV, CIV), that cooperate to transfer electrons derived from NADH and succinate to molecular oxygen, creating an electrochemical gradient over the inner membrane that drives transmembrane transport and the ATP synthase. Cytochrome c oxidase is the component of the respiratory chain that catalyzes the reduction of oxygen to water. Electrons originating from reduced cytochrome c in the intermembrane space (IMS) are transferred via the dinuclear copper A center (CU(A)) of subunit 2 and heme A of subunit 1 to the active site in subunit 1, a binuclear center (BNC) formed by heme A3 and copper B (CU(B)). The BNC reduces molecular oxygen to 2 water molecules using 4 electrons from cytochrome c in the IMS and 4 protons from the mitochondrial matrix. The polypeptide is Cytochrome c oxidase subunit 4 isoform 2, mitochondrial (Homo sapiens (Human)).